The sequence spans 98 residues: NADH-ubiquinone oxidoreductase chain 4L (98 aa).

3 consecutive transmembrane segments (helical) span residues 1-21, 29-49, and 59-79; these read MSLIHMNIIMAFTLSLVGLLM, ALLCMEGMMLSLFILATLTAL, and MPIILLVFAACEAAIGLALLV.

This sequence belongs to the complex I subunit 4L family. As to quaternary structure, core subunit of respiratory chain NADH dehydrogenase (Complex I) which is composed of 45 different subunits.

The protein localises to the mitochondrion inner membrane. It carries out the reaction a ubiquinone + NADH + 5 H(+)(in) = a ubiquinol + NAD(+) + 4 H(+)(out). Core subunit of the mitochondrial membrane respiratory chain NADH dehydrogenase (Complex I) which catalyzes electron transfer from NADH through the respiratory chain, using ubiquinone as an electron acceptor. Part of the enzyme membrane arm which is embedded in the lipid bilayer and involved in proton translocation. The polypeptide is NADH-ubiquinone oxidoreductase chain 4L (MT-ND4L) (Hyperoodon ampullatus (Northern bottlenose whale)).